Reading from the N-terminus, the 572-residue chain is Thiamine biosynthesis protein THI22 (572 aa).

Positions Met1 to Cys19 are cleaved as a signal peptide.

The protein belongs to the thiaminase-2 family.

Its subcellular location is the secreted. Is not required for thiamine biosynthesis. This Saccharomyces cerevisiae (strain ATCC 204508 / S288c) (Baker's yeast) protein is Thiamine biosynthesis protein THI22 (THI22).